The primary structure comprises 240 residues: MRRIRIYLAYDGGPFHGWQVQPGLATIQGILEEIVGGMEGKPVHVAGSGRTDAGVHALAQVAAFSIENPIPVENLRRAVNRLLPPAIRILCAEEVQADFHPRFDAVAKTYEYRMFRDEVCSPFEWPYVYHHPYPLDEARMATLARAFEGEHDFTPFAASDARDAEGKSKVRTIFSSTLDRTPQRLVYRVRGSGFLKHMVRNIVGTLIEAGRGNIADLNSLPARSGATAPAKGLFQVSVEY.

Aspartate 52 functions as the Nucleophile in the catalytic mechanism. Tyrosine 110 contacts substrate.

It belongs to the tRNA pseudouridine synthase TruA family. In terms of assembly, homodimer.

The catalysed reaction is uridine(38/39/40) in tRNA = pseudouridine(38/39/40) in tRNA. In terms of biological role, formation of pseudouridine at positions 38, 39 and 40 in the anticodon stem and loop of transfer RNAs. This is tRNA pseudouridine synthase A from Solibacter usitatus (strain Ellin6076).